The primary structure comprises 142 residues: Large ribosomal subunit protein uL11 (142 aa).

This sequence belongs to the universal ribosomal protein uL11 family. In terms of assembly, part of the ribosomal stalk of the 50S ribosomal subunit. Interacts with L10 and the large rRNA to form the base of the stalk. L10 forms an elongated spine to which L12 dimers bind in a sequential fashion forming a multimeric L10(L12)X complex. In terms of processing, one or more lysine residues are methylated.

Functionally, forms part of the ribosomal stalk which helps the ribosome interact with GTP-bound translation factors. This is Large ribosomal subunit protein uL11 from Xylella fastidiosa (strain Temecula1 / ATCC 700964).